The sequence spans 209 residues: Small ribosomal subunit protein uS4 (209 aa).

The S4 RNA-binding domain maps to 99–160 (RRLDNVVYRL…GSKEMTLLGQ (62 aa)).

The protein belongs to the universal ribosomal protein uS4 family. As to quaternary structure, part of the 30S ribosomal subunit. Contacts protein S5. The interaction surface between S4 and S5 is involved in control of translational fidelity.

In terms of biological role, one of the primary rRNA binding proteins, it binds directly to 16S rRNA where it nucleates assembly of the body of the 30S subunit. Its function is as follows. With S5 and S12 plays an important role in translational accuracy. The chain is Small ribosomal subunit protein uS4 from Koribacter versatilis (strain Ellin345).